Here is a 417-residue protein sequence, read N- to C-terminus: Serine hydroxymethyltransferase (417 aa).

(6S)-5,6,7,8-tetrahydrofolate is bound by residues Leu-121 and 125–127 (GHL). Lys-229 is modified (N6-(pyridoxal phosphate)lysine). 355 to 357 (SPF) is a (6S)-5,6,7,8-tetrahydrofolate binding site.

This sequence belongs to the SHMT family. In terms of assembly, homodimer. It depends on pyridoxal 5'-phosphate as a cofactor.

The protein resides in the cytoplasm. The enzyme catalyses (6R)-5,10-methylene-5,6,7,8-tetrahydrofolate + glycine + H2O = (6S)-5,6,7,8-tetrahydrofolate + L-serine. Its pathway is one-carbon metabolism; tetrahydrofolate interconversion. It functions in the pathway amino-acid biosynthesis; glycine biosynthesis; glycine from L-serine: step 1/1. Functionally, catalyzes the reversible interconversion of serine and glycine with tetrahydrofolate (THF) serving as the one-carbon carrier. This reaction serves as the major source of one-carbon groups required for the biosynthesis of purines, thymidylate, methionine, and other important biomolecules. Also exhibits THF-independent aldolase activity toward beta-hydroxyamino acids, producing glycine and aldehydes, via a retro-aldol mechanism. The chain is Serine hydroxymethyltransferase from Aeromonas hydrophila subsp. hydrophila (strain ATCC 7966 / DSM 30187 / BCRC 13018 / CCUG 14551 / JCM 1027 / KCTC 2358 / NCIMB 9240 / NCTC 8049).